We begin with the raw amino-acid sequence, 175 residues long: Large ribosomal subunit protein uL10 (175 aa).

It belongs to the universal ribosomal protein uL10 family. As to quaternary structure, part of the ribosomal stalk of the 50S ribosomal subunit. The N-terminus interacts with L11 and the large rRNA to form the base of the stalk. The C-terminus forms an elongated spine to which L12 dimers bind in a sequential fashion forming a multimeric L10(L12)X complex.

In terms of biological role, forms part of the ribosomal stalk, playing a central role in the interaction of the ribosome with GTP-bound translation factors. The chain is Large ribosomal subunit protein uL10 from Xylella fastidiosa (strain M12).